Here is a 571-residue protein sequence, read N- to C-terminus: Phosphomethylpyrimidine synthase (571 aa).

Residues N201, M230, Y259, H295, 315–317, 356–359, and E395 each bind substrate; these read SRG and DALR. H399 lines the Zn(2+) pocket. Position 422 (Y422) interacts with substrate. H463 serves as a coordination point for Zn(2+). Residues C545, C548, and C553 each contribute to the [4Fe-4S] cluster site.

This sequence belongs to the ThiC family. [4Fe-4S] cluster serves as cofactor.

The enzyme catalyses 5-amino-1-(5-phospho-beta-D-ribosyl)imidazole + S-adenosyl-L-methionine = 4-amino-2-methyl-5-(phosphooxymethyl)pyrimidine + CO + 5'-deoxyadenosine + formate + L-methionine + 3 H(+). The protein operates within cofactor biosynthesis; thiamine diphosphate biosynthesis. Its function is as follows. Catalyzes the synthesis of the hydroxymethylpyrimidine phosphate (HMP-P) moiety of thiamine from aminoimidazole ribotide (AIR) in a radical S-adenosyl-L-methionine (SAM)-dependent reaction. The protein is Phosphomethylpyrimidine synthase of Chlorobium phaeovibrioides (strain DSM 265 / 1930) (Prosthecochloris vibrioformis (strain DSM 265)).